Consider the following 1235-residue polypeptide: MGITKRSKDKAARAERSAGGDKSSSAKPKKATFDTTKKKEIGVSDLTLLSKVSNEAINENLKKRFEGREIYTYIGHVLVSVNPFRDLGIYTDQVLESYKGKNRLEMPPHVFAIAESAYYNMKAYSENQCVIISGESGAGKTEAAKRIMQYIANVSGGGSGDIQQIKDMVLATNPLLESFGNAKTLRNNNSSRFGKYLQIHFNAQGEPIGADITNYLLEKSRVVGQIANERNFHIFYQFTKGASQQYREMYGIQKPETYLYTSKAKCFDVDGIDDLAEYQDTLNAMKIIGLSQQEQDNIFRMLSAILWAGNLVFKEGDDGYAAVSDQSVVDFLAYLLEVDPAQLVHALTIRILTPRPGEVIESPANVPQATATRDALAMAIYYNLFDWIVERINLSLKARQATTNSIGILDIYGFEIFEKNSFEQLCINYVNEKLQQIFIQLTLKAEQDEYAREQIKWTPIKYFDNKIVCDLIESTRPPGIFSAMKDATKTAHADPAASDRTFMQSINGMSNPHLTPRQGAFIVKHYAGDVTYSVDGITDKNKDLLLKGVQNLFQASQNQFVHTLFPQQVDLDNRRQPPSAGDRIRTSANALVDTLMKCQPSYIRTIKPNENKSPTEYNEPNVLHQVKYLGLQENVRIRRAGFAYRQSFEKFVDRFFLLSPATSYAGEYTWTGSYEAATKQILKDTSIPQEEWQLGVTKAFIKSPETLFALEHMRDRYWHNMATRIQRMWRAYLAYRAEAAIRIQRIWRKKRVGAEYLQLREEGHKVLGGRKERRRMSILGSRRFLGDYLGINATTGPGAQIRNAIGIGSNEKAVFSCRGELLEHKFGRSSKPSPRILVVTNSKFYIVAQVLNQGHVQIMAEKAFPLASIKFIGASTARDDWFSLGVGSQQEPDPLLNCVLKTEMFTQMKRVMPGSFNLKIGDAIEYAKKPGKMQLVKVLKDAPTSQDFYKSSTVHTQPGEPPNSVSRPQPKAKPVPPRPITKGKLIKPGGPGGRPARNANPNRTAQPRPGGGPSIAASNPLASSAAAASSRPVPAHPGAAATPAAAKSLPSHTRQQSSTSTVRPPPPPPPAPAAKPKIMAKVLYDFAGTRENELSIKAGDMIEIVQKENNGWWLAKTPEGQAWVPAAYVEEQAPAPPVVAPRPPPPPPPAANGGGRVAPQPPAKRPVAGRKPAPAPAVASLQNRDSGMSLNGANGSGSDASRSSTPTPSIAGSLADALKARKQAMAKRDDDEDDW.

Residues 1–34 (MGITKRSKDKAARAERSAGGDKSSSAKPKKATFD) are disordered. Positions 9 to 19 (DKAARAERSAG) are enriched in basic and acidic residues. Residues 41–715 (IGVSDLTLLS…TLFALEHMRD (675 aa)) form the Myosin motor domain. 134 to 141 (GESGAGKT) contacts ATP. Positions 405-487 (SIGILDIYGF…PGIFSAMKDA (83 aa)) are actin-binding. 2 IQ domains span residues 719-739 (HNMA…RAEA) and 740-765 (AIRI…EGHK). In terms of domain architecture, TH1 spans 773 to 962 (RRRMSILGSR…TVHTQPGEPP (190 aa)). Disordered stretches follow at residues 949 to 1076 (YKSS…AAKP) and 1135 to 1235 (APPV…EDDW). A compositionally biased stretch (low complexity) spans 982–1046 (KGKLIKPGGP…PGAAATPAAA (65 aa)). Polar residues predominate over residues 1050-1062 (PSHTRQQSSTSTV). A compositionally biased stretch (pro residues) spans 1063-1073 (RPPPPPPPAPA). An SH3 domain is found at 1075-1134 (KPKIMAKVLYDFAGTRENELSIKAGDMIEIVQKENNGWWLAKTPEGQAWVPAAYVEEQAP). Residues 1135 to 1150 (APPVVAPRPPPPPPPA) show a composition bias toward pro residues. Residues 1180-1210 (SLQNRDSGMSLNGANGSGSDASRSSTPTPSI) show a composition bias toward polar residues.

The protein belongs to the TRAFAC class myosin-kinesin ATPase superfamily. Myosin family.

It localises to the cytoplasm. It is found in the cytoskeleton. The protein resides in the actin patch. Its function is as follows. Type-I myosin implicated in the organization of the actin cytoskeleton. Required for proper actin cytoskeleton polarization. At the cell cortex, assembles in patch-like structures together with proteins from the actin-polymerizing machinery and promotes actin assembly. Functions as actin nucleation-promoting factor (NPF) for the Arp2/3 complex. The chain is Myosin-1 (myo-1) from Neurospora crassa (strain ATCC 24698 / 74-OR23-1A / CBS 708.71 / DSM 1257 / FGSC 987).